The sequence spans 592 residues: Calnexin (592 aa).

The first 20 residues, 1–20 (MEGKWLLCMLLVLGTAIVEA), serve as a signal peptide directing secretion. The Lumenal portion of the chain corresponds to 21 to 481 (HDGHDDDVID…QMIEAAEERP (461 aa)). Residues serine 74 and aspartate 117 each contribute to the Ca(2+) site. Lysine 137 bears the N6-acetyllysine mark. Cysteines 160 and 194 form a disulfide. Positions 164, 166, 185, and 192 each coordinate an alpha-D-glucoside. Positions 260-345 (GNLLNDMTPP…AEKPEDWDED (86 aa)) are disordered. Residues 274-319 (REIEDPEDRKPEDWDERPKIPDPEAVKPDDWDEDAPAKIPDEEATK) are compositionally biased toward basic and acidic residues. The tract at residues 276 to 409 (IEDPEDRKPE…RKIPNPDFFE (134 aa)) is p domain (Extended arm). Repeat copies occupy residues 278-290 (DPEDRKPEDWDER), 295-307 (DPEAVKPDDWDED), 314-326 (DEEATKPEGWLDD), 333-345 (DPDAEKPEDWDED), and 348-358 (GEWEAPQIANP). 4 X approximate repeats regions lie at residues 278 to 345 (DPED…WDED) and 348 to 405 (GEWE…IPNP). Positions 323 to 345 (WLDDEPEYVPDPDAEKPEDWDED) are enriched in acidic residues. The segment at 326-359 (DEPEYVPDPDAEKPEDWDEDMDGEWEAPQIANPK) is interaction with PPIB. Cysteine 360 and cysteine 366 are disulfide-bonded. Repeat copies occupy residues 367 to 377 (GVWQRPMIDNP), 381 to 391 (GKWKPPMIDNP), and 395 to 405 (GIWKPRKIPNP). Residue glutamate 425 coordinates an alpha-D-glucoside. Position 436 (aspartate 436) interacts with Ca(2+). Residues 482–502 (WLWVVYILTVALPVFLVILFC) traverse the membrane as a helical segment. Residues cysteine 502 and cysteine 503 are each lipidated (S-palmitoyl cysteine). Over 503–592 (CSGKKQTSAM…SPRNRKPRRE (90 aa)) the chain is Cytoplasmic. The segment at 503–592 (CSGKKQTSAM…SPRNRKPRRE (90 aa)) is sufficient to mediate interaction with SGIP1. A disordered region spans residues 511 to 592 (AMEYKKTDAP…SPRNRKPRRE (82 aa)). The segment covering 525 to 547 (KEEEEEKEEEKDKGDEEEEGEEK) has biased composition (acidic residues). Serine 554 carries the phosphoserine modification. The residue at position 562 (threonine 562) is a Phosphothreonine. Serine 564 carries the post-translational modification Phosphoserine; by MAPK3. The residue at position 583 (serine 583) is a Phosphoserine.

Belongs to the calreticulin family. Interacts with MAPK3/ERK1. Interacts with KCNH2. Associates with ribosomes. Interacts with SGIP1; involved in negative regulation of endocytosis. The palmitoylated form interacts with the ribosome-translocon complex component SSR1, promoting efficient folding of glycoproteins. Interacts with SERPINA2P/SERPINA2 and with the S and Z variants of SERPINA1. Interacts with PPIB. Interacts with ZNRF4. Interacts with SMIM22. Interacts with TMX2. Interacts with TMEM35A/NACHO and CHRNA7. Interacts with reticulophagy regulators RETREG2 and RETREG3. Interacts with DNM1L; may form part of a larger protein complex at the ER-mitochondrial interface during mitochondrial fission. Interacts with ADAM7. Phosphorylated at Ser-564 by MAPK3/ERK1. Phosphorylation by MAPK3/ERK1 increases its association with ribosomes. Post-translationally, palmitoylation by DHHC6 leads to the preferential localization to the perinuclear rough ER. It mediates the association of calnexin with the ribosome-translocon complex (RTC) which is required for efficient folding of glycosylated proteins. In terms of processing, ubiquitinated, leading to proteasomal degradation. Probably ubiquitinated by ZNRF4.

The protein localises to the endoplasmic reticulum membrane. It localises to the mitochondrion membrane. The protein resides in the melanosome membrane. Functionally, calcium-binding protein that interacts with newly synthesized monoglucosylated glycoproteins in the endoplasmic reticulum. It may act in assisting protein assembly and/or in the retention within the ER of unassembled protein subunits. It seems to play a major role in the quality control apparatus of the ER by the retention of incorrectly folded proteins. Associated with partial T-cell antigen receptor complexes that escape the ER of immature thymocytes, it may function as a signaling complex regulating thymocyte maturation. Additionally it may play a role in receptor-mediated endocytosis at the synapse. This is Calnexin (CANX) from Pongo abelii (Sumatran orangutan).